Consider the following 89-residue polypeptide: Putative septation protein SpoVG (89 aa).

The protein belongs to the SpoVG family.

Could be involved in septation. In Heliobacterium modesticaldum (strain ATCC 51547 / Ice1), this protein is Putative septation protein SpoVG.